A 179-amino-acid polypeptide reads, in one-letter code: Peptide deformylase 2 (179 aa).

Residues Cys-104 and His-146 each contribute to the Fe cation site. Glu-147 is an active-site residue. A Fe cation-binding site is contributed by His-150.

This sequence belongs to the polypeptide deformylase family. The cofactor is Fe(2+).

The catalysed reaction is N-terminal N-formyl-L-methionyl-[peptide] + H2O = N-terminal L-methionyl-[peptide] + formate. Removes the formyl group from the N-terminal Met of newly synthesized proteins. Requires at least a dipeptide for an efficient rate of reaction. N-terminal L-methionine is a prerequisite for activity but the enzyme has broad specificity at other positions. This chain is Peptide deformylase 2, found in Streptomyces coelicolor (strain ATCC BAA-471 / A3(2) / M145).